The primary structure comprises 306 residues: Glutathione transport system permease protein GsiC (306 aa).

Residues 1 to 8 (MLNYVIKR) are Cytoplasmic-facing. The chain crosses the membrane as a helical span at residues 9–29 (LLGLIPTLFIVSVLVFLFVHM). The Periplasmic portion of the chain corresponds to 30–102 (LPGDPARLIA…SRFMPTLWLT (73 aa)). The region spanning 95 to 292 (FMPTLWLTIT…LEFILINLVV (198 aa)) is the ABC transmembrane type-1 domain. A helical transmembrane segment spans residues 103–123 (ITSMVWAVIFGMAAGIIAAVW). The Cytoplasmic segment spans residues 124–134 (RNRWPDRLSMT). Residues 135-155 (IAVSGISFPAFALGMLLIQVF) traverse the membrane as a helical segment. Topologically, residues 156 to 168 (SVELGWLPTVGAD) are periplasmic. A helical transmembrane segment spans residues 169–189 (SWQHYILSSLTLGAAVAAVMA). Residues 190–228 (RFTRASFVDVLSEDYMRTARAKGVSETWVVLKHGLRNAM) lie on the Cytoplasmic side of the membrane. A helical membrane pass occupies residues 229-249 (IPVVTMMGLQFGFLLGGSIVV). The Periplasmic portion of the chain corresponds to 250-277 (EKVFNWPGLGRLLVDSVEMRDYPVIQAE). The helical transmembrane segment at 278 to 298 (ILLFSLEFILINLVVDVLYAA) threads the bilayer. Residues 299 to 306 (INPAIRYK) are Cytoplasmic-facing.

The protein belongs to the binding-protein-dependent transport system permease family. In terms of assembly, the complex is composed of two ATP-binding proteins (GsiA), two transmembrane proteins (GsiC and GsiD) and a solute-binding protein (GsiB).

The protein localises to the cell inner membrane. In terms of biological role, part of the ABC transporter complex GsiABCD involved in glutathione import. Probably responsible for the translocation of the substrate across the membrane. The protein is Glutathione transport system permease protein GsiC of Shigella boydii serotype 4 (strain Sb227).